The following is a 102-amino-acid chain: MSPRKTYILKLYVAGNTPNSVRALKTLKNILEVEFQGVYALKVIDVLKNPQLAEEDKILATPTLAKVLPLPVRRIIGDLSDREKVLIGLDLLYGELQDSDDF.

Belongs to the KaiB family. Undergoes a major conformational rearrangment; in the free state forms homotetramers with 2 dimers. When bound to the CI domain of KaiC switches to a monomeric thioredoxin-fold (KaiB(fs)). Monomers, homodimers and homotetramers are detected in solution; at low concentrations only monomers are seen. In vitro forms KaiC(6):KaiB(1) and KaiC(6):KaiB(6) complexes. Only associates with 'Ser-431'-phosphorylated KaiC (and not with doubly phosphorylated KaiC). Complex formation between KaiB and KaiC is regulated by the phosphorylation state of KaiC and by an ATP hydrolysis-driven conformation change in the CI ring of KaiC; complex formation is slow. Slow complex formation is crucial for the timing of the circadian period. In low resolution cryo-EM forms a KaiC(6):KaiB(6) complex. The KaiABC complex composition changes during the circadian cycle to control KaiC phosphorylation. Complexes KaiC(6), KaiA(2-4):KaiC(6), KaiB(6):KaiC(6) and KaiC(6):KaiB(6):KaiA(12) are among the most important forms, many form cooperatively. The KaiB:KaiC complex is more prevalent at 16 hours (in the dark) than at 4 hours (in the light) in the circadian cycle. The KaiA:KaiB complex is only found at 20-24 hours in the circadian cycle (subjective night). Binds to the CI domain of KaiC; SasA and KaiB compete to bind to the CI domain.

It localises to the cytoplasm. It is found in the cell membrane. Functionally, key component of the KaiABC oscillator complex, which constitutes the main circadian regulator in cyanobacteria. Complex composition changes during the circadian cycle to control KaiC phosphorylation. KaiA stimulates KaiC autophosphorylation, while KaiB sequesters KaiA, leading to KaiC autodephosphorylation. KaiA binding to the KaiC CII domain yields KaiA(2-4):KaiC(6) complexes which stimulate KaiC autophosphorylation. Phospho-Ser-431 KaiC accumulation triggers binding of KaiB to form the KaiB(6):KaiC(6) complex, leading to changes in the output regulators CikA and SasA. KaiB switches to a thioredoxin-like fold (KaiB(fs)) in complex with KaiC. KaiB(6):KaiC(6) formation exposes a site for KaiA binding that sequesters KaiA from the CII domain, making the KaiC(6):KaiB(6):KaiA(12) complex that results in KaiC autodephosphorylation. Complete dephosphorylation of KaiC leads to dissociation of KaiA(2):KaiB(1), completing 1 cycle of the Kai oscillator. Its function is as follows. Circadian oscillations can be generated in vitro by incubating KaiA, KaiB and KaiC with 1 mM ATP. The cycle is self-sustainable for at least 3 cycles and resistant to temperature changes. A very robust clock is reconstituted with KaiA, KaiB, KaiC, SasA, CikA and RpaA; output is measured by transcription from an appropriate reporter. In terms of biological role, a metamorphic protein which reversibly switches between an inactive tetrameric fold and a rare, thioredoxin-like monomeric fold (KaiB(fs)). KaiB(fs) binds phospho-KaiC, KaiA and CikA. KaiA and CikA compete for binding to KaiB(fs), and KaiB(fs) and SasA compete for binding to KaiC, thus the clock oscillator and output signal pathway are tightly coupled. This Synechococcus elongatus (strain ATCC 33912 / PCC 7942 / FACHB-805) (Anacystis nidulans R2) protein is Circadian clock oscillator protein KaiB.